Consider the following 31-residue polypeptide: Cyclotide vpub-B (31 aa).

The cyclopeptide (Gly-Asn) cross-link spans 1 to 31; sequence GIIPCGESCVFIPCITSVVGCSCKSKVCYKN. Cystine bridges form between C5–C21, C9–C23, and C14–C28.

This sequence belongs to the cyclotide family. Bracelet subfamily. This is a cyclic peptide.

Probably participates in a plant defense mechanism. The chain is Cyclotide vpub-B from Viola pubescens (Downy yellow violet).